The chain runs to 151 residues: Large ribosomal subunit protein uL13 (151 aa).

It belongs to the universal ribosomal protein uL13 family. In terms of assembly, part of the 50S ribosomal subunit.

Functionally, this protein is one of the early assembly proteins of the 50S ribosomal subunit, although it is not seen to bind rRNA by itself. It is important during the early stages of 50S assembly. This Rippkaea orientalis (strain PCC 8801 / RF-1) (Cyanothece sp. (strain PCC 8801)) protein is Large ribosomal subunit protein uL13.